The chain runs to 74 residues: Alpha-conotoxin GeXIVA (74 aa).

The signal sequence occupies residues 1–22; the sequence is MKLTCVLIITVLFLTACQLTTA. Positions 23–46 are excised as a propeptide; the sequence is VTYSRGEHKHRALMSTGTNYRLPK. An interacts with alpha-9-alpha-10 (CHRNA9-CHRNA10) nAChR region spans residues 56–64; it reads RSPYDRRRR.

Belongs to the conotoxin O1 superfamily. In terms of processing, the native disulfide bond pairing has not been studied. Three isomers may exist: the bead isomer (I-II; III-IV), the globular isomer (I-III; II-IV), the ribbon isomer (I-IV; II-III). They have all been synthesized and their activity tested. All of them show similar potency on alpha-9-alpha-10 (CHRNA9-CHRNA10) nAChR, showing that disulfide bonds does not significantly affect their activity. In addition, removal of disulfide bonds does not affect the activity on alpha-9-alpha-10 (CHRNA9-CHRNA10) nAChR either. Expressed by the venom duct.

It is found in the secreted. Functionally, alpha-conotoxins act on postsynaptic membranes, they bind to the nicotinic acetylcholine receptors (nAChR) and thus inhibit them. This toxin is very potent on alpha-9-alpha-10/CHRNA9-CHRNA10 nAChR (IC(50)=4.61-12 nM for the bead isomer (I-II; III-IV), IC(50)=7-16 nM for the ribbon isomer (I-IV; II-III) and IC(50)=22.7 nM for the globular isomer (I-III; II-IV)). The bead isomer also shows a weak inhibition on other nAChRs (alpha-1-beta-1-delta-epsilon/CHRNA1-CHRNB1-CHRND-CHRNE, alpha-7/CHRNA7, alpha-6/alpha-3-beta-2-beta-3 (CHRNA6/CHRNA3-CHRNB2-CHRNB3), alpha-3-beta-2/CHRNA3-CHRNB2, alpha-2-beta-2/CHRNA2-CHRNB2, alpha-6/alpha-3-beta-4 (CHRNA6/CHRNA3-CHRNB4), alpha-4-beta-2/CHRNA4-CHRNB2, alpha-4-beta-4/CHRNA4-CHRNB4, alpha-2-beta-4/CHRNA2-CHRNB4, alpha-3-beta-4/CHRNA3-CHRNB4). The toxin blockade is voltage-dependent, and its binding site does not overlap with the binding site of the competitive antagonist alpha-conotoxin RgIA. The toxin inhibits Sf9 cell growth. Both the bead and ribbon isomers relieve pain effects in the rat chronic constriction injury (CCI) model of neuropathic pain, and in the acute pain model of tail flick test, but have no effect on motor performance. This chain is Alpha-conotoxin GeXIVA, found in Conus generalis (General cone).